The chain runs to 227 residues: tRNA (guanine-N(7)-)-methyltransferase (227 aa).

Positions 57, 82, 109, and 132 each coordinate S-adenosyl-L-methionine. Asp132 is an active-site residue. Residues Lys136, Asp168, and 205–208 (TKFE) each bind substrate.

Belongs to the class I-like SAM-binding methyltransferase superfamily. TrmB family.

It carries out the reaction guanosine(46) in tRNA + S-adenosyl-L-methionine = N(7)-methylguanosine(46) in tRNA + S-adenosyl-L-homocysteine. Its pathway is tRNA modification; N(7)-methylguanine-tRNA biosynthesis. Its function is as follows. Catalyzes the formation of N(7)-methylguanine at position 46 (m7G46) in tRNA. In Leifsonia xyli subsp. xyli (strain CTCB07), this protein is tRNA (guanine-N(7)-)-methyltransferase.